The primary structure comprises 162 residues: G/U mismatch-specific DNA glycosylase (162 aa).

This sequence belongs to the uracil-DNA glycosylase (UDG) superfamily. TDG/mug family. Binds DNA as a monomer.

It localises to the cytoplasm. It carries out the reaction Specifically hydrolyzes mismatched double-stranded DNA and polynucleotides, releasing free uracil.. Excises ethenocytosine and uracil, which can arise by alkylation or deamination of cytosine, respectively, from the corresponding mispairs with guanine in ds-DNA. It is capable of hydrolyzing the carbon-nitrogen bond between the sugar-phosphate backbone of the DNA and the mispaired base. The complementary strand guanine functions in substrate recognition. Required for DNA damage lesion repair in stationary-phase cells. The polypeptide is G/U mismatch-specific DNA glycosylase (Serratia marcescens).